Reading from the N-terminus, the 428-residue chain is L-rhamnose isomerase (428 aa).

3 residues coordinate Mn(2+): histidine 260, aspartate 292, and aspartate 294.

The protein belongs to the rhamnose isomerase family. The cofactor is Mn(2+).

The protein resides in the cytoplasm. The enzyme catalyses L-rhamnopyranose = L-rhamnulose. Its pathway is carbohydrate degradation; L-rhamnose degradation; glycerone phosphate from L-rhamnose: step 1/3. Catalyzes the interconversion of L-rhamnose and L-rhamnulose. This Enterococcus faecalis (strain ATCC 700802 / V583) protein is L-rhamnose isomerase.